The chain runs to 535 residues: 2-isopropylmalate synthase (535 aa).

Residues valine 13–proline 274 form the Pyruvate carboxyltransferase domain. 4 residues coordinate Mn(2+): aspartate 22, histidine 213, histidine 215, and asparagine 249. Positions glutamine 414–alanine 535 are regulatory domain.

It belongs to the alpha-IPM synthase/homocitrate synthase family. LeuA type 1 subfamily. Homodimer. Mn(2+) is required as a cofactor.

It localises to the cytoplasm. The catalysed reaction is 3-methyl-2-oxobutanoate + acetyl-CoA + H2O = (2S)-2-isopropylmalate + CoA + H(+). It functions in the pathway amino-acid biosynthesis; L-leucine biosynthesis; L-leucine from 3-methyl-2-oxobutanoate: step 1/4. In terms of biological role, catalyzes the condensation of the acetyl group of acetyl-CoA with 3-methyl-2-oxobutanoate (2-ketoisovalerate) to form 3-carboxy-3-hydroxy-4-methylpentanoate (2-isopropylmalate). In Thermosynechococcus vestitus (strain NIES-2133 / IAM M-273 / BP-1), this protein is 2-isopropylmalate synthase.